The chain runs to 209 residues: Large ribosomal subunit protein uL3 (209 aa).

The tract at residues 130–162 (RGPMTHGSKFKRAPGSMGASSDPSRTFKNKRMP) is disordered.

The protein belongs to the universal ribosomal protein uL3 family. As to quaternary structure, part of the 50S ribosomal subunit. Forms a cluster with proteins L14 and L19.

In terms of biological role, one of the primary rRNA binding proteins, it binds directly near the 3'-end of the 23S rRNA, where it nucleates assembly of the 50S subunit. The polypeptide is Large ribosomal subunit protein uL3 (Clostridium botulinum (strain Alaska E43 / Type E3)).